Reading from the N-terminus, the 685-residue chain is Methionine--tRNA ligase (685 aa).

A 'HIGH' region motif is present at residues 12-22 (PYANGSIHLGH). Residues C143, C146, C156, and C159 each coordinate Zn(2+). Residues 339–343 (KMSKS) carry the 'KMSKS' region motif. Position 342 (K342) interacts with ATP. Residues 582–685 (DFMKIDMRVA…TGAQPGDKVG (104 aa)) form the tRNA-binding domain.

The protein belongs to the class-I aminoacyl-tRNA synthetase family. MetG type 1 subfamily. Homodimer. The cofactor is Zn(2+).

The protein resides in the cytoplasm. The enzyme catalyses tRNA(Met) + L-methionine + ATP = L-methionyl-tRNA(Met) + AMP + diphosphate. Its function is as follows. Is required not only for elongation of protein synthesis but also for the initiation of all mRNA translation through initiator tRNA(fMet) aminoacylation. In Neisseria meningitidis serogroup B (strain ATCC BAA-335 / MC58), this protein is Methionine--tRNA ligase.